The sequence spans 581 residues: Metal transporter Nramp7.1 (581 aa).

N-linked (GlcNAc...) asparagine glycosylation is found at N11 and N19. 7 helical membrane-spanning segments follow: residues 57–77, 90–110, 146–166, 181–201, 224–244, 270–290, and 307–327; these read FLSY…PGNL, ELLW…SLAA, YCLW…EGII, LLIG…WVGV, LLIA…MSYV, IALL…ALVL, and YFLI…LAVI. A glycan (N-linked (GlcNAc...) asparagine) is linked at N338. 5 helical membrane-spanning segments follow: residues 370 to 390, 409 to 429, 434 to 454, 473 to 493, and 513 to 533; these read IYAI…TYAG, LVTR…GGSS, LIII…FALI, IYII…NIYY, and VFIG…VIYL. A disordered region spans residues 551 to 581; sequence PQQQANMENGLGPEMERVPYREDLADIPLPE. Over residues 564–574 the composition is skewed to basic and acidic residues; the sequence is EMERVPYREDL.

The protein belongs to the NRAMP (TC 2.A.55) family.

It localises to the membrane. Functionally, probable divalent metal transporter. The chain is Metal transporter Nramp7.1 from Populus trichocarpa (Western balsam poplar).